A 166-amino-acid polypeptide reads, in one-letter code: uncharacterized protein (166 aa).

3 consecutive 4Fe-4S ferredoxin-type domains span residues 3–33 (MKKI…GRIA), 37–67 (KDGK…EHKD), and 68–97 (GYVY…MEDK). Positions 13, 16, 19, 23, 46, 49, 54, 58, 77, 80, 83, 87, 101, 104, 111, and 115 each coordinate [4Fe-4S] cluster.

[4Fe-4S] cluster is required as a cofactor.

This is an uncharacterized protein from Methanocaldococcus jannaschii (strain ATCC 43067 / DSM 2661 / JAL-1 / JCM 10045 / NBRC 100440) (Methanococcus jannaschii).